Here is a 366-residue protein sequence, read N- to C-terminus: Flagellar P-ring protein (366 aa).

A signal peptide spans 1 to 19; sequence MTLIRLLACLLFLPCLAQA.

The protein belongs to the FlgI family. As to quaternary structure, the basal body constitutes a major portion of the flagellar organelle and consists of four rings (L,P,S, and M) mounted on a central rod.

Its subcellular location is the periplasm. It localises to the bacterial flagellum basal body. Assembles around the rod to form the L-ring and probably protects the motor/basal body from shearing forces during rotation. This chain is Flagellar P-ring protein, found in Ruegeria pomeroyi (strain ATCC 700808 / DSM 15171 / DSS-3) (Silicibacter pomeroyi).